Reading from the N-terminus, the 351-residue chain is Anthranilate phosphoribosyltransferase (351 aa).

5-phospho-alpha-D-ribose 1-diphosphate contacts are provided by residues Gly80, 83–84, Thr88, 90–93, 108–116, and Ser120; these read GD, NIST, and KHGNRSVTS. Gly80 contributes to the anthranilate binding site. Residue Ser92 participates in Mg(2+) binding. Residue Asn111 participates in anthranilate binding. An anthranilate-binding site is contributed by Arg166. Asp229 and Glu230 together coordinate Mg(2+).

Belongs to the anthranilate phosphoribosyltransferase family. As to quaternary structure, homodimer. It depends on Mg(2+) as a cofactor.

The catalysed reaction is N-(5-phospho-beta-D-ribosyl)anthranilate + diphosphate = 5-phospho-alpha-D-ribose 1-diphosphate + anthranilate. Its pathway is amino-acid biosynthesis; L-tryptophan biosynthesis; L-tryptophan from chorismate: step 2/5. Its function is as follows. Catalyzes the transfer of the phosphoribosyl group of 5-phosphorylribose-1-pyrophosphate (PRPP) to anthranilate to yield N-(5'-phosphoribosyl)-anthranilate (PRA). The protein is Anthranilate phosphoribosyltransferase of Chlorobium phaeovibrioides (strain DSM 265 / 1930) (Prosthecochloris vibrioformis (strain DSM 265)).